Reading from the N-terminus, the 169-residue chain is Transcription antitermination protein NusB (169 aa).

The disordered stretch occupies residues 150-169; sequence AAATSRRTETAGGESNDAGS.

Belongs to the NusB family.

In terms of biological role, involved in transcription antitermination. Required for transcription of ribosomal RNA (rRNA) genes. Binds specifically to the boxA antiterminator sequence of the ribosomal RNA (rrn) operons. The sequence is that of Transcription antitermination protein NusB from Rhodococcus jostii (strain RHA1).